The following is a 416-amino-acid chain: CinA-like protein (416 aa).

Belongs to the CinA family.

This chain is CinA-like protein, found in Trichormus variabilis (strain ATCC 29413 / PCC 7937) (Anabaena variabilis).